A 431-amino-acid chain; its full sequence is UPF0597 protein TDE_2144 (431 aa).

The protein belongs to the UPF0597 family.

The polypeptide is UPF0597 protein TDE_2144 (Treponema denticola (strain ATCC 35405 / DSM 14222 / CIP 103919 / JCM 8153 / KCTC 15104)).